The sequence spans 315 residues: Ornithine carbamoyltransferase (315 aa).

Residues 53-56 (STRT), Q80, R104, and 131-134 (HPCQ) each bind carbamoyl phosphate. Residues N163, D227, and 231–232 (SM) contribute to the L-ornithine site. Residues 267 to 268 (CL) and R295 contribute to the carbamoyl phosphate site.

It belongs to the aspartate/ornithine carbamoyltransferase superfamily. OTCase family.

Its subcellular location is the cytoplasm. The catalysed reaction is carbamoyl phosphate + L-ornithine = L-citrulline + phosphate + H(+). The protein operates within amino-acid degradation; L-arginine degradation via ADI pathway; carbamoyl phosphate from L-arginine: step 2/2. Functionally, reversibly catalyzes the transfer of the carbamoyl group from carbamoyl phosphate (CP) to the N(epsilon) atom of ornithine (ORN) to produce L-citrulline. The sequence is that of Ornithine carbamoyltransferase from Rhodococcus opacus (strain B4).